Here is a 145-residue protein sequence, read N- to C-terminus: Neuromedin-S (145 aa).

An N-terminal signal peptide occupies residues 1-27 (MRSEKHLPPLPLLLAICCLGTLHPSSG). 2 consecutive propeptides follow at residues 28–89 (FPQS…HEIY) and 92–117 (FLFQFSRTKDPSLKTGESQIATAEYT). At N136 the chain carries Asparagine amide. Residues 140–145 (VSINEH) constitute a propeptide that is removed on maturation.

The protein belongs to the NmU family. In terms of tissue distribution, expressed by the skin glands.

The protein localises to the secreted. Stimulates uterine smooth muscle contraction. Synthetic peptide NmS-17 induces calcium mobilization in CHO cells transfected with either human FM-3/GPR66 (EC(50)=0.085 nM) or FM-4/TGR-1 (EC(50)=0.231 nM) NmU/NmS receptors. This chain is Neuromedin-S (nms), found in Bombina orientalis (Oriental fire-bellied toad).